A 292-amino-acid polypeptide reads, in one-letter code: Transmembrane and ubiquitin-like domain-containing protein 1 (292 aa).

A helical membrane pass occupies residues 11–31; the sequence is VTLLFGVVFLVLVLVLAWAST. The interval 34–143 is disordered; sequence VEPPEHLLSP…TQPSAEDAAS (110 aa). Residues 71–80 show a composition bias toward basic and acidic residues; that stretch reads VRDEDDKSEP. A compositionally biased stretch (low complexity) spans 84-94; it reads AGAAGQSADGS. One can recognise a Ubiquitin-like domain in the interval 149 to 222; sequence MVLRLKFLND…LHCHISQHAT (74 aa). Helical transmembrane passes span 237-257 and 269-289; these read VALN…SVLW and APAT…AFGV.

It is found in the membrane. Its subcellular location is the cytoplasm. The protein resides in the nucleus. In terms of biological role, may contribute to the regulation of translation during cell-cycle progression. May contribute to the regulation of cell proliferation. The membrane form is involved in sterol-regulated ubiquitination and degradation of HMG-CoA reductase HMGCR. May be involved in centrosome assembly. This Danio rerio (Zebrafish) protein is Transmembrane and ubiquitin-like domain-containing protein 1 (tmub1).